The chain runs to 625 residues: Alpha-amylase 1 (625 aa).

An N-terminal signal peptide occupies residues M1 to A22. An intrachain disulfide couples C51 to C59. W105 provides a ligand contact to substrate. Position 143 (N143) interacts with Ca(2+). N153, N163, and N180 each carry an N-linked (GlcNAc...) asparagine glycan. C172 and C187 form a disulfide bridge. Ca(2+)-binding residues include E185 and D198. Residue R227 participates in substrate binding. D229 is a binding site for Ca(2+). D229 acts as the Nucleophile in catalysis. K232–Q233 is a binding site for substrate. Residue N241 is glycosylated (N-linked (GlcNAc...) asparagine). E253 serves as a coordination point for Ca(2+). E253 functions as the Proton donor in the catalytic mechanism. N260 and N286 each carry an N-linked (GlcNAc...) asparagine glycan. C263 and C306 are disulfide-bonded. Position 322 (D322) interacts with substrate. N-linked (GlcNAc...) asparagine glycosylation occurs at N331. R370 contributes to the substrate binding site. N440 and N461 each carry an N-linked (GlcNAc...) asparagine glycan. The interval S526–T579 is disordered. The GPI-anchor amidated serine moiety is linked to residue S603. Residues S604 to I625 constitute a propeptide, removed in mature form.

This sequence belongs to the glycosyl hydrolase 13 family. Requires Ca(2+) as cofactor.

The protein localises to the cell membrane. It carries out the reaction Endohydrolysis of (1-&gt;4)-alpha-D-glucosidic linkages in polysaccharides containing three or more (1-&gt;4)-alpha-linked D-glucose units.. This chain is Alpha-amylase 1 (aah1), found in Schizosaccharomyces pombe (strain 972 / ATCC 24843) (Fission yeast).